The following is an 86-amino-acid chain: Curamycin polyketide synthase acyl carrier protein (86 aa).

The Carrier domain occupies 7 to 86 (QVTVEELATL…VVNGALASGA (80 aa)). Serine 44 is modified (O-(pantetheine 4'-phosphoryl)serine).

4'-phosphopantetheine is transferred from CoA to a specific serine of the apo-ACP-like protein.

Its pathway is antibiotic biosynthesis; curamycin biosynthesis. Acyl carrier protein. In Streptomyces cyaneus (Streptomyces curacoi), this protein is Curamycin polyketide synthase acyl carrier protein (curE).